A 282-amino-acid polypeptide reads, in one-letter code: Ermin (282 aa).

Polar residues-rich tracts occupy residues 1–12 (MTDTPVTLSGSE) and 21–30 (NGQQPSSQTR). Positions 1 to 71 (MTDTPVTLSG…NSKGNVLPRG (71 aa)) are disordered. A phosphoserine mark is found at Ser-72, Ser-212, Ser-224, Ser-228, and Ser-231. Positions 212–224 (SPLKEESLAREDS) are enriched in basic and acidic residues. The disordered stretch occupies residues 212-246 (SPLKEESLAREDSPLSSPSSQPGTPDEQLVLGKKG). Residues 225-234 (PLSSPSSQPG) are compositionally biased toward polar residues. Position 235 is a phosphothreonine (Thr-235). A binds actin region spans residues 263-282 (KIRKGNTKQRIDEFESMMHL).

In terms of assembly, binds actin. In terms of tissue distribution, expressed specifically by the oligodendrocytes. Highest expression seen in the spinal cord followed by brainstem, cerebellum, thalamus, and hypothalamus. In the myelin sheath, found mainly in the abaxon and the lateral few terminal loops. Its apposition to the myelinated axon, through the latter, defines an axonal subregion, termed juxtanode, at the Ranvier node-paranode junction.

It localises to the cytoplasm. It is found in the cytoskeleton. Plays a role in cytoskeletal rearrangements during the late wrapping and/or compaction phases of myelinogenesis as well as in maintenance and stability of myelin sheath in the adult. May play an important role in late-stage oligodendroglia maturation, myelin/Ranvier node formation during CNS development, and in the maintenance and plasticity of related structures in the mature CNS. The polypeptide is Ermin (Ermn) (Rattus norvegicus (Rat)).